A 418-amino-acid polypeptide reads, in one-letter code: MNIFEELKARGLVFQTTDEQALVKALTEGQVSYYTGYDPTADSLHLGHLVAILTSRRLQLAGHKPYALVGGATGLIGDPSFKDAERSLQTKETVLEWSDKIKGQLSTFLDFENGDNKAELVNNYDWFSQISFIDFLRDVGKYFTVNYMMSKDSVKKRIETGISYTEFAYQIMQGYDFYELNDKHNVTLQIGGSDQWGNMTAGTELLRKKADKTGHVMTVPLITDSTGKKFGKSEGNAVWLDADKTSPYEMYQFWLNVMDDDAVRFLKIFTFLSLDEIAEIETQFNAARHERLAQKILAREVVTLVHGEEAYKQALNITEQLFAGNIKNLSANELKQGLSNVPNYHVQSEDSLNLVDMLVTAGISPSKRQAREDVQNGAIYINGDRVQDLDYQLSNDDKTDDQLTVIRRGKKKYAVLTY.

Tyr-34 serves as a coordination point for L-tyrosine. A 'HIGH' region motif is present at residues 39–48 (PTADSLHLGH). Positions 169 and 173 each coordinate L-tyrosine. A 'KMSKS' region motif is present at residues 229-233 (KFGKS). ATP is bound at residue Lys-232. The 67-residue stretch at 352-418 (LNLVDMLVTA…GKKKYAVLTY (67 aa)) folds into the S4 RNA-binding domain.

The protein belongs to the class-I aminoacyl-tRNA synthetase family. TyrS type 1 subfamily. Homodimer.

The protein localises to the cytoplasm. It carries out the reaction tRNA(Tyr) + L-tyrosine + ATP = L-tyrosyl-tRNA(Tyr) + AMP + diphosphate + H(+). Functionally, catalyzes the attachment of tyrosine to tRNA(Tyr) in a two-step reaction: tyrosine is first activated by ATP to form Tyr-AMP and then transferred to the acceptor end of tRNA(Tyr). In Streptococcus pyogenes serotype M5 (strain Manfredo), this protein is Tyrosine--tRNA ligase.